Consider the following 153-residue polypeptide: MTEVIAYLIEHFQDFDTCPPPEDLGMLLEEAGFDTMEIGNTLMMMEVLLNSSEFSAEPADSGALRVYSKEETDNLPQEVMGLMQYLIEEKAVSCEQREIIIHALMHIPGDEITVDTAKVLTLLLLWANKSELPVLVGDELMSALLLDNKPTMN.

Belongs to the Smg family.

This Neisseria meningitidis serogroup B (strain ATCC BAA-335 / MC58) protein is Protein Smg homolog.